An 893-amino-acid polypeptide reads, in one-letter code: Translation initiation factor IF-2 (893 aa).

The disordered stretch occupies residues 1 to 266 (MVDTKNPGDK…AKPAPSKQRG (266 aa)). Residues 59–70 (PADAPTAAAAAP) show a composition bias toward low complexity. Over residues 71 to 92 (APAPAPVPSAAPRPAAPPPPSR) the composition is skewed to pro residues. A compositionally biased stretch (low complexity) spans 93-104 (PQQSRSQSPSRS). Basic and acidic residues-rich tracts occupy residues 128–148 (ARVR…RRNS) and 155–196 (AERE…EAKR). The span at 197–226 (PAAAATPAKSATPAARPTGAPAVRAPGVAA) shows a compositional bias: low complexity. One can recognise a tr-type G domain in the interval 389-560 (PRSPVVTVMG…ALQAELLDLK (172 aa)). A G1 region spans residues 398–405 (GHVDHGKT). 398–405 (GHVDHGKT) serves as a coordination point for GTP. The G2 stretch occupies residues 423–427 (GITQH). Positions 446-449 (DTPG) are G3. Residues 446–450 (DTPGH) and 500–503 (NKID) each bind GTP. Positions 500-503 (NKID) are G4. A G5 region spans residues 536-538 (SAK).

The protein belongs to the TRAFAC class translation factor GTPase superfamily. Classic translation factor GTPase family. IF-2 subfamily.

It is found in the cytoplasm. Functionally, one of the essential components for the initiation of protein synthesis. Protects formylmethionyl-tRNA from spontaneous hydrolysis and promotes its binding to the 30S ribosomal subunits. Also involved in the hydrolysis of GTP during the formation of the 70S ribosomal complex. This Rhodopseudomonas palustris (strain BisA53) protein is Translation initiation factor IF-2.